A 158-amino-acid polypeptide reads, in one-letter code: Large ribosomal subunit protein bL21 (158 aa).

Residues serine 106–aspartate 158 are disordered. Residues proline 115–threonine 143 show a composition bias toward basic and acidic residues. Residues glutamine 146 to aspartate 158 show a composition bias toward low complexity.

The protein belongs to the bacterial ribosomal protein bL21 family. As to quaternary structure, part of the 50S ribosomal subunit. Contacts protein L20.

Functionally, this protein binds to 23S rRNA in the presence of protein L20. This Bartonella tribocorum (strain CIP 105476 / IBS 506) protein is Large ribosomal subunit protein bL21.